Consider the following 918-residue polypeptide: Isoleucine--tRNA ligase (918 aa).

The 'HIGH' region motif lies at 57–67 (PYANGHIHIGH). Residue Glu564 coordinates L-isoleucyl-5'-AMP. Residues 605–609 (KMSKS) carry the 'KMSKS' region motif. Lys608 is an ATP binding site. Zn(2+) contacts are provided by Cys888, Cys891, Cys903, and Cys906.

The protein belongs to the class-I aminoacyl-tRNA synthetase family. IleS type 1 subfamily. In terms of assembly, monomer. Zn(2+) is required as a cofactor.

The protein resides in the cytoplasm. It catalyses the reaction tRNA(Ile) + L-isoleucine + ATP = L-isoleucyl-tRNA(Ile) + AMP + diphosphate. In terms of biological role, catalyzes the attachment of isoleucine to tRNA(Ile). As IleRS can inadvertently accommodate and process structurally similar amino acids such as valine, to avoid such errors it has two additional distinct tRNA(Ile)-dependent editing activities. One activity is designated as 'pretransfer' editing and involves the hydrolysis of activated Val-AMP. The other activity is designated 'posttransfer' editing and involves deacylation of mischarged Val-tRNA(Ile). This Nitratiruptor sp. (strain SB155-2) protein is Isoleucine--tRNA ligase.